Here is a 228-residue protein sequence, read N- to C-terminus: MGFGDLKSPAGLKVLNEFLADKSYIEGYVPSQADVAVFDALSGAPPADLFHALRWYNHIKSYEKQKSSLPGVKKPLGNYGPVNIEDTTGSTAKDTKEEDDDDDIDLFGSDDEEENEESKRVREERLAQYEAKKSKKPALIAKSSILLDVKPWDDETDMAKLEECVRSIQMEGLVWGASKLVPVGYGIKKLQIQCVVEDDKVGTDVLEENITAFEDFVQSMDVAAFNKI.

Positions 2 to 90 (GFGDLKSPAG…PVNIEDTTGS (89 aa)) constitute a GST C-terminal domain. Residues 70–122 (PGVKKPLGNYGPVNIEDTTGSTAKDTKEEDDDDDIDLFGSDDEEENEESKRVR) form a disordered region. The segment covering 97 to 116 (EEDDDDDIDLFGSDDEEENE) has biased composition (acidic residues). S109 is subject to Phosphoserine; by CK2.

It belongs to the EF-1-beta/EF-1-delta family. As to quaternary structure, EF-1 is composed of 4 subunits: alpha, beta (alpha subunit of the eEF1B subcomplex), delta (beta subunit of the eEF1B subcomplex), and gamma (gamma subunit of the eEF1B subcomplex). Interacts with elongation factor EEF1A1. Post-translationally, phosphorylation affects the GDP/GTP exchange rate.

Functionally, catalytic subunit of the guanine nucleotide exchange factor (GEF) (eEF1B subcomplex) of the eukaryotic elongation factor 1 complex (eEF1). Stimulates the exchange of GDP for GTP on elongation factor 1A (eEF1A), probably by displacing GDP from the nucleotide binding pocket in eEF1A. The protein is Elongation factor 1-beta (eef1b) of Xenopus tropicalis (Western clawed frog).